Consider the following 331-residue polypeptide: 6-phosphogluconolactonase (331 aa).

The protein belongs to the cycloisomerase 2 family.

The enzyme catalyses 6-phospho-D-glucono-1,5-lactone + H2O = 6-phospho-D-gluconate + H(+). It participates in carbohydrate degradation; pentose phosphate pathway; D-ribulose 5-phosphate from D-glucose 6-phosphate (oxidative stage): step 2/3. In terms of biological role, catalyzes the hydrolysis of 6-phosphogluconolactone to 6-phosphogluconate. In Klebsiella pneumoniae (strain 342), this protein is 6-phosphogluconolactonase.